The primary structure comprises 77 residues: Small VCP/p97-interacting protein (77 aa).

Positions 1-77 (MGLCFPCPAE…TAGGLRWTVS (77 aa)) are disordered. Gly-2 carries the N-myristoyl glycine lipid modification. S-palmitoyl cysteine attachment occurs at residues Cys-4 and Cys-7. Residues 18–37 (PEEKREKLAEAAERRQKEAA) are compositionally biased toward basic and acidic residues. A VCP/p97-interacting motif (VIM) region spans residues 21-33 (KREKLAEAAERRQ). Ser-46 bears the Phosphoserine mark.

Belongs to the SVIP family. Interacts (via VIM motif) with VCP/p97. Forms a complex with VCP/p97 and DERL1. Highly expressed in the medulla spinalis, adrenal gland, cerebrum, cerebellum, and sciatic nerve.

The protein localises to the membrane. It localises to the smooth endoplasmic reticulum membrane. It is found in the golgi apparatus membrane. The protein resides in the cell membrane. Its subcellular location is the lysosome membrane. Its function is as follows. Negative regulator of the ER-associated degradation pathway (ERAD) of misfolded proteins. It competes with AMFR/gp78 for binding VCP/p97, and inhibits AMFR/gp78-VCP/p97 complex formation that is required for degradation of ERAD substrates. Involved in the regulation of adrenal cortisol and dehydroepiandrosterone (DHEA) biosynthesis. The protein is Small VCP/p97-interacting protein (Svip) of Mus musculus (Mouse).